The primary structure comprises 306 residues: MALRHFLTLRDLSTLELNRILERASELKKMQQSNKVYQPFVGKVLGMIFEKSSTRTRISFEAGINQFGGSAIFLSPRDTQLGRGEPIEDSARVISSMLDIVMIRTFGHDIVERFASYSKVPVINGLTDDHHPCQLLADLQTYIEHRGSIEGKTVAWIGDGNNMCNSYIEAAHMMGFKLKIASPKGYEPKPEFLAEFGHCVELFDNAEDAAVNADLIVTDVWASMGQEEEQKLREKAFANFQVNEKLMGLAHPDCLFMHCLPAHRGEEISETMLDHKNAVVWDEAENRLHAQKALMEFLLNENLKKA.

Carbamoyl phosphate contacts are provided by residues 53–56, Gln80, Arg104, and 131–134; these read STRT and HPCQ. L-ornithine-binding positions include Asn162, Asp219, and 223 to 224; that span reads SM. Residues 259–260 and Arg287 each bind carbamoyl phosphate; that span reads CL.

It belongs to the aspartate/ornithine carbamoyltransferase superfamily. OTCase family.

The protein resides in the cytoplasm. It carries out the reaction carbamoyl phosphate + L-ornithine = L-citrulline + phosphate + H(+). Its pathway is amino-acid degradation; L-arginine degradation via ADI pathway; carbamoyl phosphate from L-arginine: step 2/2. Its function is as follows. Reversibly catalyzes the transfer of the carbamoyl group from carbamoyl phosphate (CP) to the N(epsilon) atom of ornithine (ORN) to produce L-citrulline. The chain is Ornithine carbamoyltransferase from Acinetobacter baumannii (strain AYE).